Reading from the N-terminus, the 113-residue chain is Retrotransposon Gag-like protein 8A (113 aa).

This sequence belongs to the FAM127 family.

The polypeptide is Retrotransposon Gag-like protein 8A (Homo sapiens (Human)).